The primary structure comprises 217 residues: Octanoyltransferase (217 aa).

A BPL/LPL catalytic domain is found at 32 to 207 (SESHDELWIV…TFSQLLGYQH (176 aa)). Substrate-binding positions include 71–78 (RGGQVTYH), 138–140 (SLG), and 151–153 (GLA). The active-site Acyl-thioester intermediate is C169.

The protein belongs to the LipB family.

It is found in the cytoplasm. It carries out the reaction octanoyl-[ACP] + L-lysyl-[protein] = N(6)-octanoyl-L-lysyl-[protein] + holo-[ACP] + H(+). It participates in protein modification; protein lipoylation via endogenous pathway; protein N(6)-(lipoyl)lysine from octanoyl-[acyl-carrier-protein]: step 1/2. Its function is as follows. Catalyzes the transfer of endogenously produced octanoic acid from octanoyl-acyl-carrier-protein onto the lipoyl domains of lipoate-dependent enzymes. Lipoyl-ACP can also act as a substrate although octanoyl-ACP is likely to be the physiological substrate. This Shewanella baltica (strain OS223) protein is Octanoyltransferase.